A 180-amino-acid polypeptide reads, in one-letter code: Large ribosomal subunit protein uL6 (180 aa).

This sequence belongs to the universal ribosomal protein uL6 family. In terms of assembly, part of the 50S ribosomal subunit.

Its function is as follows. This protein binds to the 23S rRNA, and is important in its secondary structure. It is located near the subunit interface in the base of the L7/L12 stalk, and near the tRNA binding site of the peptidyltransferase center. This is Large ribosomal subunit protein uL6 from Clostridium botulinum (strain Alaska E43 / Type E3).